The chain runs to 31 residues: Phallacidin proprotein 1 (31 aa).

Residues 1 to 10 constitute a propeptide that is removed on maturation; it reads MSDINATRLP. The segment at residues 11–17 is a cross-link (cyclopeptide (Ala-Pro)); sequence AWLVDCP. A cross-link (2'-cysteinyl-6'-hydroxytryptophan sulfoxide (Trp-Cys)) is located at residues 12–16; that stretch reads WLVDC. The propeptide occupies 18-31; sequence CVGDDVNRLLTRGE.

Belongs to the MSDIN fungal toxin family. In terms of processing, processed by the macrocyclase-peptidase enzyme POPB to yield a toxic cyclic heptapeptide. POPB first removes 10 residues from the N-terminus. Conformational trapping of the remaining peptide forces the enzyme to release this intermediate rather than proceed to macrocyclization. The enzyme rebinds the remaining peptide in a different conformation and catalyzes macrocyclization of the N-terminal 7 residues.

Functionally, major toxin that belongs to the bicyclic heptapeptides called phallotoxins. Although structurally related to amatoxins, phallotoxins have a different mode of action, which is the stabilization of F-actin. Phallotoxins are poisonous when administered parenterally, but not orally because of poor absorption. This is Phallacidin proprotein 1 (PHA1_2) from Amanita bisporigera (Destroying angel).